A 2570-amino-acid chain; its full sequence is Highly reducing polyketide synthase tstA (2570 aa).

In terms of domain architecture, Ketosynthase family 3 (KS3) spans 16–443 (AMPIAVVGIG…GANAHVVLEN (428 aa)). Catalysis depends on for beta-ketoacyl synthase activity residues Cys-191, His-326, and His-366. Residues 458–478 (HTRKSATESSGTSTPSNPGPH) are disordered. Over residues 464 to 478 (TESSGTSTPSNPGPH) the composition is skewed to low complexity. Positions 567-898 (FVFTGQGAQW…YSALVRNKNA (332 aa)) constitute a Malonyl-CoA:ACP transacylase (MAT) domain. The segment at 965–1103 (TDLLGVLERN…GLVSVVAPQK (139 aa)) is N-terminal hotdog fold. In terms of domain architecture, PKS/mFAS DH spans 965-1293 (TDLLGVLERN…CATLAREGAD (329 aa)). Catalysis depends on His-997, which acts as the Proton acceptor; for dehydratase activity. Residues 1133–1293 (RRNINVPQFY…CATLAREGAD (161 aa)) form a C-terminal hotdog fold region. The active-site Proton donor; for dehydratase activity is Asp-1198. A methyltransferase (CMeT) domain region spans residues 1343–1645 (LERAAYYMLK…IATSINSNNY (303 aa)). The region spanning 1866–2178 (GLLDSIFWTD…TGGHMGKLVG (313 aa)) is the Enoyl reductase (ER) domain. Residues 2202–2379 (ASYVLIGGLG…ATTIDLGAIS (178 aa)) enclose the Ketoreductase (KR) domain. Positions 2482 to 2559 (DASELILGAL…HLATKIAQRS (78 aa)) constitute a Carrier domain. Ser-2519 bears the O-(pantetheine 4'-phosphoryl)serine mark.

The cofactor is pantetheine 4'-phosphate.

It participates in secondary metabolite biosynthesis. Highly reducing polyketide synthase; part of the gene cluster that mediates the biosynthesis of the antihypercholesterolemic agents phomoidrides which are dimeric anhydrides. The pathway begins with the highly reducing polyketide synthase tstA that catalyzes the formation of a C12-fatty acyl-ACP, starting from one acetate and 5 malonate units. The hydrolase tstM is involved in the release of the C12-fatty acyl chain from tstA. The alkylcitrate synthase (ACS) tstJ and the alkylcitrate dehydratase (ACDH) tstI then give rise to decarboxylated monomeric anhydrides by coupling the C12-fatty acyl chain with oxalacetic acid. The cyclase tstC is responsible for the dimerization of the monomeric anhydrides which leads to the production of prephomoidride that contains the characteristic bicyclo[4.3.1]deca-1,6-diene system of phomoidrides. Iterative oxidation catalyzed by the alpha-ketoglutarate-dependent dioxygenase tstK produced then phomoidride A. Finally, the methyltransferase tstE converts phomoidride A to phomoidride B via an acetalization reaction. The phosphatidylethanolamine-binding protein tstB and tstN are not essential for dimerization and their functions have still to be determined. The protein is Highly reducing polyketide synthase tstA of Talaromyces stipitatus (strain ATCC 10500 / CBS 375.48 / QM 6759 / NRRL 1006) (Penicillium stipitatum).